A 1004-amino-acid polypeptide reads, in one-letter code: UPF0182 protein Mflv_4654 (1004 aa).

A run of 7 helical transmembrane segments spans residues 18 to 38, 63 to 83, 114 to 134, 176 to 196, 211 to 231, 260 to 280, and 288 to 308; these read FLIA…RFID, LVIF…GLAL, LIGI…GQSY, FVGV…FGGI, IQLI…YWFD, KLIL…AIFL, and IGVV…PLVV. Positions 896–940 are enriched in low complexity; sequence PGADATATGPAATEPPAGQAPQTQGNNTAPPAAQPPNRQGQAPAG. Residues 896–960 are disordered; it reads PGADATATGP…TGPTQLSAAK (65 aa).

It belongs to the UPF0182 family.

The protein localises to the cell membrane. The chain is UPF0182 protein Mflv_4654 from Mycolicibacterium gilvum (strain PYR-GCK) (Mycobacterium gilvum (strain PYR-GCK)).